Here is a 220-residue protein sequence, read N- to C-terminus: Octanoyltransferase (220 aa).

The 187-residue stretch at 31–217 folds into the BPL/LPL catalytic domain; sequence ENTPDEIWLV…HFAEILGYNA (187 aa). Residues 70–77, 146–148, and 159–161 contribute to the substrate site; these read RGGQITYH, SLG, and GLA. The active-site Acyl-thioester intermediate is Cys177.

Belongs to the LipB family.

It localises to the cytoplasm. It carries out the reaction octanoyl-[ACP] + L-lysyl-[protein] = N(6)-octanoyl-L-lysyl-[protein] + holo-[ACP] + H(+). Its pathway is protein modification; protein lipoylation via endogenous pathway; protein N(6)-(lipoyl)lysine from octanoyl-[acyl-carrier-protein]: step 1/2. Its function is as follows. Catalyzes the transfer of endogenously produced octanoic acid from octanoyl-acyl-carrier-protein onto the lipoyl domains of lipoate-dependent enzymes. Lipoyl-ACP can also act as a substrate although octanoyl-ACP is likely to be the physiological substrate. The protein is Octanoyltransferase of Actinobacillus succinogenes (strain ATCC 55618 / DSM 22257 / CCUG 43843 / 130Z).